The sequence spans 45 residues: Photosystem II reaction center protein K (45 aa).

Positions 1-8 are excised as a propeptide; the sequence is MDFALLLA. Residues 24-44 form a helical membrane-spanning segment; that stretch reads LPLIPLFFLLLAFVWQAAVGF.

It belongs to the PsbK family. As to quaternary structure, PSII is composed of 1 copy each of membrane proteins PsbA, PsbB, PsbC, PsbD, PsbE, PsbF, PsbH, PsbI, PsbJ, PsbK, PsbL, PsbM, PsbT, PsbX, PsbY, PsbZ, Psb30/Ycf12, peripheral proteins PsbO, CyanoQ (PsbQ), PsbU, PsbV and a large number of cofactors. It forms dimeric complexes.

It is found in the cellular thylakoid membrane. Functionally, one of the components of the core complex of photosystem II (PSII). PSII is a light-driven water:plastoquinone oxidoreductase that uses light energy to abstract electrons from H(2)O, generating O(2) and a proton gradient subsequently used for ATP formation. It consists of a core antenna complex that captures photons, and an electron transfer chain that converts photonic excitation into a charge separation. The protein is Photosystem II reaction center protein K of Gloeothece citriformis (strain PCC 7424) (Cyanothece sp. (strain PCC 7424)).